The sequence spans 285 residues: Probable endonuclease 4 (285 aa).

Zn(2+)-binding residues include His69, His109, Glu145, Asp179, His182, His216, Asp229, His231, and Glu261.

This sequence belongs to the AP endonuclease 2 family. It depends on Zn(2+) as a cofactor.

It catalyses the reaction Endonucleolytic cleavage to 5'-phosphooligonucleotide end-products.. In terms of biological role, endonuclease IV plays a role in DNA repair. It cleaves phosphodiester bonds at apurinic or apyrimidinic (AP) sites, generating a 3'-hydroxyl group and a 5'-terminal sugar phosphate. This Escherichia coli O1:K1 / APEC protein is Probable endonuclease 4.